Here is a 215-residue protein sequence, read N- to C-terminus: Transmembrane protein 267 (215 aa).

Transmembrane regions (helical) follow at residues 77–97 (FCEV…HFFL), 114–134 (PLHC…LMQL), and 178–198 (YWLY…IMCL).

Its subcellular location is the membrane. This is Transmembrane protein 267 (tmem267) from Xenopus laevis (African clawed frog).